We begin with the raw amino-acid sequence, 243 residues long: 23S rRNA (guanosine-2'-O-)-methyltransferase RlmB (243 aa).

Residues Gly196, Ile216, and Leu225 each contribute to the S-adenosyl-L-methionine site.

This sequence belongs to the class IV-like SAM-binding methyltransferase superfamily. RNA methyltransferase TrmH family. RlmB subfamily. In terms of assembly, homodimer.

It localises to the cytoplasm. The enzyme catalyses guanosine(2251) in 23S rRNA + S-adenosyl-L-methionine = 2'-O-methylguanosine(2251) in 23S rRNA + S-adenosyl-L-homocysteine + H(+). In terms of biological role, specifically methylates the ribose of guanosine 2251 in 23S rRNA. The chain is 23S rRNA (guanosine-2'-O-)-methyltransferase RlmB from Shigella flexneri.